Reading from the N-terminus, the 304-residue chain is Aspartate carbamoyltransferase catalytic subunit (304 aa).

Arginine 57 and threonine 58 together coordinate carbamoyl phosphate. Lysine 85 contributes to the L-aspartate binding site. Residues arginine 107, histidine 134, and glutamine 137 each coordinate carbamoyl phosphate. 2 residues coordinate L-aspartate: arginine 167 and arginine 216. The carbamoyl phosphate site is built by alanine 260 and proline 261.

Belongs to the aspartate/ornithine carbamoyltransferase superfamily. ATCase family. In terms of assembly, heterododecamer (2C3:3R2) of six catalytic PyrB chains organized as two trimers (C3), and six regulatory PyrI chains organized as three dimers (R2).

It catalyses the reaction carbamoyl phosphate + L-aspartate = N-carbamoyl-L-aspartate + phosphate + H(+). It participates in pyrimidine metabolism; UMP biosynthesis via de novo pathway; (S)-dihydroorotate from bicarbonate: step 2/3. Catalyzes the condensation of carbamoyl phosphate and aspartate to form carbamoyl aspartate and inorganic phosphate, the committed step in the de novo pyrimidine nucleotide biosynthesis pathway. The sequence is that of Aspartate carbamoyltransferase catalytic subunit from Fusobacterium nucleatum subsp. nucleatum (strain ATCC 25586 / DSM 15643 / BCRC 10681 / CIP 101130 / JCM 8532 / KCTC 2640 / LMG 13131 / VPI 4355).